The chain runs to 615 residues: Dihydroxy-acid dehydratase (615 aa).

Position 81 (D81) interacts with Mg(2+). A [2Fe-2S] cluster-binding site is contributed by C122. Residues D123 and K124 each contribute to the Mg(2+) site. K124 carries the N6-carboxylysine modification. C195 serves as a coordination point for [2Fe-2S] cluster. E491 is a binding site for Mg(2+). S517 (proton acceptor) is an active-site residue.

The protein belongs to the IlvD/Edd family. As to quaternary structure, homodimer. [2Fe-2S] cluster serves as cofactor. It depends on Mg(2+) as a cofactor.

It catalyses the reaction (2R)-2,3-dihydroxy-3-methylbutanoate = 3-methyl-2-oxobutanoate + H2O. The catalysed reaction is (2R,3R)-2,3-dihydroxy-3-methylpentanoate = (S)-3-methyl-2-oxopentanoate + H2O. The protein operates within amino-acid biosynthesis; L-isoleucine biosynthesis; L-isoleucine from 2-oxobutanoate: step 3/4. Its pathway is amino-acid biosynthesis; L-valine biosynthesis; L-valine from pyruvate: step 3/4. Functions in the biosynthesis of branched-chain amino acids. Catalyzes the dehydration of (2R,3R)-2,3-dihydroxy-3-methylpentanoate (2,3-dihydroxy-3-methylvalerate) into 2-oxo-3-methylpentanoate (2-oxo-3-methylvalerate) and of (2R)-2,3-dihydroxy-3-methylbutanoate (2,3-dihydroxyisovalerate) into 2-oxo-3-methylbutanoate (2-oxoisovalerate), the penultimate precursor to L-isoleucine and L-valine, respectively. This is Dihydroxy-acid dehydratase from Shewanella pealeana (strain ATCC 700345 / ANG-SQ1).